The following is a 133-amino-acid chain: Interferon alpha-inducible protein 27-like protein 2 (133 aa).

Transmembrane regions (helical) follow at residues 8-28 (AAIGGALAVAAVPAVLGAVGF), 51-71 (GGGVAAGSLVATLQSVGAAGL), and 73-93 (TSSNILLGSIGSAFGALLGGA). The disordered stretch occupies residues 93–133 (AKRASPSPPPGGPRPEGEQPGENVPQVEPPKSPLGPEKHEK).

It belongs to the IFI6/IFI27 family.

Its subcellular location is the mitochondrion membrane. Its function is as follows. Plays a role in the apoptotic process and has a pro-apoptotic activity. The sequence is that of Interferon alpha-inducible protein 27-like protein 2 from Bos taurus (Bovine).